Reading from the N-terminus, the 70-residue chain is Peptide BmKn1 (70 aa).

The N-terminal stretch at 1–23 (MKSQTFFLLFLVVLLLAISQSEA) is a signal peptide. Phe-36 bears the Phenylalanine amide mark. The propeptide occupies 40-70 (SMRDMDTMKYLYDPSLSAADLKTLQKLMENY).

It belongs to the non-disulfide-bridged peptide (NDBP) superfamily. Short antimicrobial peptide (group 4) family. As to expression, expressed by the venom gland.

Its subcellular location is the secreted. The protein resides in the target cell membrane. Functionally, antibacterial peptide. This is Peptide BmKn1 from Olivierus martensii (Manchurian scorpion).